A 450-amino-acid polypeptide reads, in one-letter code: MRRHAIILAAGKGTRMKSKKYKVLHEVAGKPMVEHVLESVKGSGVDQVVTIVGHGAESVKGHLGERSLYSFQEKQLGTAHAVQMAKSHLEDKEGTTIVVCGDTPLITKETLETLIAHHEDANAQATVLSASIQQPYGYGRIVRNASGRLERIVEEKDATQAEKDINEISSGIFAFNNKTLFEKLTQVKNDNAQGEYYLPDVLSLILNDGGIVEVYRTNDVEEIMGVNDRVMLSQAEKAMQRRTNHYHMLNGVTIIDPDSTFIGPDVTIGSDTVIEPGVRINGRTEIGEDVVIGQYSEINNSTIENGACIQQSVVNDASVGANTKVGPFAQLRPGAQLGADVKVGNFVEIKKADLKDGAKVSHLSYIGDAVIGERTNIGCGTITVNYDGENKFKTIVGKDSFVGCNVNLVAPVTIGDDVLVAAGSTITDDVPNDSLAVARARQTTKEGYRK.

The pyrophosphorylase stretch occupies residues 1-229 (MRRHAIILAA…VEEIMGVNDR (229 aa)). UDP-N-acetyl-alpha-D-glucosamine contacts are provided by residues 8–11 (LAAG), lysine 22, glutamine 72, and 77–78 (GT). Mg(2+) is bound at residue aspartate 102. UDP-N-acetyl-alpha-D-glucosamine contacts are provided by glycine 139, glutamate 154, and asparagine 227. Position 227 (asparagine 227) interacts with Mg(2+). The tract at residues 230 to 250 (VMLSQAEKAMQRRTNHYHMLN) is linker. The tract at residues 251 to 450 (GVTIIDPDST…RQTTKEGYRK (200 aa)) is N-acetyltransferase. UDP-N-acetyl-alpha-D-glucosamine-binding residues include arginine 332 and lysine 350. Histidine 362 (proton acceptor) is an active-site residue. The UDP-N-acetyl-alpha-D-glucosamine site is built by tyrosine 365 and asparagine 376. Acetyl-CoA is bound by residues 385 to 386 (NY), alanine 422, and arginine 439.

It in the N-terminal section; belongs to the N-acetylglucosamine-1-phosphate uridyltransferase family. The protein in the C-terminal section; belongs to the transferase hexapeptide repeat family. Homotrimer. Mg(2+) is required as a cofactor.

It is found in the cytoplasm. It catalyses the reaction alpha-D-glucosamine 1-phosphate + acetyl-CoA = N-acetyl-alpha-D-glucosamine 1-phosphate + CoA + H(+). It carries out the reaction N-acetyl-alpha-D-glucosamine 1-phosphate + UTP + H(+) = UDP-N-acetyl-alpha-D-glucosamine + diphosphate. It functions in the pathway nucleotide-sugar biosynthesis; UDP-N-acetyl-alpha-D-glucosamine biosynthesis; N-acetyl-alpha-D-glucosamine 1-phosphate from alpha-D-glucosamine 6-phosphate (route II): step 2/2. The protein operates within nucleotide-sugar biosynthesis; UDP-N-acetyl-alpha-D-glucosamine biosynthesis; UDP-N-acetyl-alpha-D-glucosamine from N-acetyl-alpha-D-glucosamine 1-phosphate: step 1/1. It participates in bacterial outer membrane biogenesis; LPS lipid A biosynthesis. Catalyzes the last two sequential reactions in the de novo biosynthetic pathway for UDP-N-acetylglucosamine (UDP-GlcNAc). The C-terminal domain catalyzes the transfer of acetyl group from acetyl coenzyme A to glucosamine-1-phosphate (GlcN-1-P) to produce N-acetylglucosamine-1-phosphate (GlcNAc-1-P), which is converted into UDP-GlcNAc by the transfer of uridine 5-monophosphate (from uridine 5-triphosphate), a reaction catalyzed by the N-terminal domain. This chain is Bifunctional protein GlmU, found in Staphylococcus aureus (strain Mu50 / ATCC 700699).